The sequence spans 341 residues: Adenosine deaminase (341 aa).

Zn(2+) contacts are provided by H15 and H17. Substrate is bound by residues H17, D19, and G172. H199 contributes to the Zn(2+) binding site. E202 serves as the catalytic Proton donor. D279 serves as a coordination point for Zn(2+).

It belongs to the metallo-dependent hydrolases superfamily. Adenosine and AMP deaminases family. Adenosine deaminase subfamily. Zn(2+) serves as cofactor.

It carries out the reaction adenosine + H2O + H(+) = inosine + NH4(+). It catalyses the reaction 2'-deoxyadenosine + H2O + H(+) = 2'-deoxyinosine + NH4(+). Its function is as follows. Catalyzes the hydrolytic deamination of adenosine and 2-deoxyadenosine. The sequence is that of Adenosine deaminase from Streptococcus equi subsp. zooepidemicus (strain MGCS10565).